The sequence spans 461 residues: Mitochondrial distribution and morphology protein 12 (461 aa).

The SMP-LTD domain maps to methionine 1 to proline 454. 2 disordered regions span residues arginine 75–glycine 104 and aspartate 226–alanine 301. Polar residues-rich tracts occupy residues arginine 80–aspartate 97 and arginine 272–proline 288.

It belongs to the MDM12 family. As to quaternary structure, component of the ER-mitochondria encounter structure (ERMES) or MDM complex, composed of MMM1, MDM10, MDM12 and MDM34. An MMM1 homodimer associates with one molecule of MDM12 on each side in a pairwise head-to-tail manner, and the SMP-LTD domains of MMM1 and MDM12 generate a continuous hydrophobic tunnel for phospholipid trafficking.

It localises to the mitochondrion outer membrane. The protein localises to the endoplasmic reticulum membrane. In terms of biological role, component of the ERMES/MDM complex, which serves as a molecular tether to connect the endoplasmic reticulum (ER) and mitochondria. Components of this complex are involved in the control of mitochondrial shape and protein biogenesis, and function in nonvesicular lipid trafficking between the ER and mitochondria. MDM12 is required for the interaction of the ER-resident membrane protein MMM1 and the outer mitochondrial membrane-resident beta-barrel protein MDM10. The MDM12-MMM1 subcomplex functions in the major beta-barrel assembly pathway that is responsible for biogenesis of all mitochondrial outer membrane beta-barrel proteins, and acts in a late step after the SAM complex. The MDM10-MDM12-MMM1 subcomplex further acts in the TOM40-specific pathway after the action of the MDM12-MMM1 complex. Essential for establishing and maintaining the structure of mitochondria and maintenance of mtDNA nucleoids. In Mycosarcoma maydis (Corn smut fungus), this protein is Mitochondrial distribution and morphology protein 12.